An 88-amino-acid chain; its full sequence is Small ribosomal subunit protein bS16 (88 aa).

The protein belongs to the bacterial ribosomal protein bS16 family.

The sequence is that of Small ribosomal subunit protein bS16 from Anaeromyxobacter sp. (strain Fw109-5).